The chain runs to 171 residues: Co-chaperone protein HscB (171 aa).

Residues 2–74 (DYFTLFGLPA…LARAEYLLSL (73 aa)) enclose the J domain.

It belongs to the HscB family. Interacts with HscA and stimulates its ATPase activity. Interacts with IscU.

Functionally, co-chaperone involved in the maturation of iron-sulfur cluster-containing proteins. Seems to help targeting proteins to be folded toward HscA. This is Co-chaperone protein HscB from Enterobacter sp. (strain 638).